A 129-amino-acid chain; its full sequence is Large ribosomal subunit protein bL17 (129 aa).

The protein belongs to the bacterial ribosomal protein bL17 family. As to quaternary structure, part of the 50S ribosomal subunit. Contacts protein L32.

This chain is Large ribosomal subunit protein bL17, found in Pseudomonas aeruginosa (strain UCBPP-PA14).